The following is a 122-amino-acid chain: Large ribosomal subunit protein uL14 (122 aa).

The protein belongs to the universal ribosomal protein uL14 family. As to quaternary structure, part of the 50S ribosomal subunit. Forms a cluster with proteins L3 and L19. In the 70S ribosome, L14 and L19 interact and together make contacts with the 16S rRNA in bridges B5 and B8.

Its function is as follows. Binds to 23S rRNA. Forms part of two intersubunit bridges in the 70S ribosome. The sequence is that of Large ribosomal subunit protein uL14 from Chlamydia pneumoniae (Chlamydophila pneumoniae).